The chain runs to 750 residues: Amyloid-beta A4 precursor protein-binding family A member 2 (750 aa).

Disordered stretches follow at residues 1 to 94 and 143 to 346; these read MAHR…PEEE and DSVG…IPET. A Phosphoserine modification is found at serine 11. Over residues 70–80 the composition is skewed to polar residues; sequence GDSSSDYVNNT. The span at 81-94 shows a compositional bias: acidic residues; sequence SEEEDYDEGLPEEE. The tract at residues 185-271 is STXBP1-binding; it reads HYCSSKESYQ…STEACPPSDT (87 aa). A Phosphoserine modification is found at serine 209. The span at 219 to 228 shows a compositional bias: acidic residues; that stretch reads DLEEQEEDID. 2 stretches are compositionally biased toward polar residues: residues 238 to 248 and 332 to 344; these read LSMTSITSASE and SDLN…NNIP. The 190-residue stretch at 367–556 folds into the PID domain; the sequence is LIDGIIFAAN…IINTQEMYND (190 aa). PDZ domains follow at residues 569-654 and 660-736; these read ELQL…NIVS and TVLI…MPAA.

In terms of assembly, part of a multimeric complex containing STXBP1 and syntaxin-1. Binds to the cytoplasmic domain of amyloid-beta protein, and to the nuclear factor NF-kappa-B/p65 via its PDZ domain. Interacts with the N-terminal domain of NECAB3. In terms of tissue distribution, specifically expressed in neurons, predominantly of the cerebellum, hippocampus, and spinal cord. Lesser extent in neurons of the cerebral cortex and anterior thalmic nuclei.

Functionally, putative function in synaptic vesicle exocytosis by binding to STXBP1, an essential component of the synaptic vesicle exocytotic machinery. May modulate processing of the amyloid-beta precursor protein (APP) and hence formation of APP-beta. The polypeptide is Amyloid-beta A4 precursor protein-binding family A member 2 (Apba2) (Mus musculus (Mouse)).